Reading from the N-terminus, the 253-residue chain is Triosephosphate isomerase (253 aa).

9–11 is a binding site for substrate; sequence NWK. His95 serves as the catalytic Electrophile. Residue Glu167 is the Proton acceptor of the active site. Substrate contacts are provided by residues Gly173, Ser213, and 234–235; that span reads GG. Ser213 is subject to Phosphoserine.

This sequence belongs to the triosephosphate isomerase family. Homodimer.

Its subcellular location is the cytoplasm. The catalysed reaction is D-glyceraldehyde 3-phosphate = dihydroxyacetone phosphate. It participates in carbohydrate biosynthesis; gluconeogenesis. It functions in the pathway carbohydrate degradation; glycolysis; D-glyceraldehyde 3-phosphate from glycerone phosphate: step 1/1. In terms of biological role, involved in the gluconeogenesis. Catalyzes stereospecifically the conversion of dihydroxyacetone phosphate (DHAP) to D-glyceraldehyde-3-phosphate (G3P). This chain is Triosephosphate isomerase, found in Bacillus licheniformis (strain ATCC 14580 / DSM 13 / JCM 2505 / CCUG 7422 / NBRC 12200 / NCIMB 9375 / NCTC 10341 / NRRL NRS-1264 / Gibson 46).